The following is a 178-amino-acid chain: Probable chorismate pyruvate-lyase (178 aa).

Positions 72, 110, and 169 each coordinate substrate.

The protein belongs to the UbiC family.

Its subcellular location is the cytoplasm. It carries out the reaction chorismate = 4-hydroxybenzoate + pyruvate. It participates in cofactor biosynthesis; ubiquinone biosynthesis. Its function is as follows. Removes the pyruvyl group from chorismate, with concomitant aromatization of the ring, to provide 4-hydroxybenzoate (4HB) for the ubiquinone pathway. This is Probable chorismate pyruvate-lyase from Nitrosomonas eutropha (strain DSM 101675 / C91 / Nm57).